The chain runs to 101 residues: Small ribosomal subunit protein uS14 (101 aa).

It belongs to the universal ribosomal protein uS14 family. Part of the 30S ribosomal subunit. Contacts proteins S3 and S10.

Its function is as follows. Binds 16S rRNA, required for the assembly of 30S particles and may also be responsible for determining the conformation of the 16S rRNA at the A site. In Vibrio campbellii (strain ATCC BAA-1116), this protein is Small ribosomal subunit protein uS14.